We begin with the raw amino-acid sequence, 378 residues long: MLPLSIKDDEYKPPKFNLFGKISGWFRSILSDKTSRNLFFFLCLNLSFAFVELLYGIWSNCLGLISDSFHMFFDSTAILAGLAASVISKWRDNDAFSYGYVRAEVLAGFVNGLFLIFTAFFIFSEGVERALAPPDVHHERLLLVSILGFVVNLVGIFVFNHGGHGHSHGSGHGHSHSLFNGALDHSHGHEDHCHSHGAKHGGAHSHDHDHAHGHGHLHSHDGPSFKETAGPSRQILQGVFLHILADTLGSIGVIASAIMMQNFGLMIADPICSILIAILIVVSVIPLLRESIGILMQRTPPSLENVLPQCYQRVQQLQGVYNLQEQHFWTLCSDVYVGTLKLVVAPDADARWILSQTHNIFTQAGVRQLYVQIDFAAM.

At 1 to 37 (MLPLSIKDDEYKPPKFNLFGKISGWFRSILSDKTSRN) the chain is on the cytoplasmic side. A helical transmembrane segment spans residues 38-58 (LFFFLCLNLSFAFVELLYGIW). Topologically, residues 59-67 (SNCLGLISD) are lumenal. Residues 68–88 (SFHMFFDSTAILAGLAASVIS) form a helical membrane-spanning segment. Topologically, residues 89–102 (KWRDNDAFSYGYVR) are cytoplasmic. A helical membrane pass occupies residues 103-123 (AEVLAGFVNGLFLIFTAFFIF). The Lumenal portion of the chain corresponds to 124 to 140 (SEGVERALAPPDVHHER). A helical membrane pass occupies residues 141–161 (LLLVSILGFVVNLVGIFVFNH). Residues 161–220 (HGGHGHSHGSGHGHSHSLFNGALDHSHGHEDHCHSHGAKHGGAHSHDHDHAHGHGHLHSH) are his-rich loop. The Cytoplasmic portion of the chain corresponds to 162–238 (GGHGHSHGSG…AGPSRQILQG (77 aa)). The tract at residues 186–228 (SHGHEDHCHSHGAKHGGAHSHDHDHAHGHGHLHSHDGPSFKET) is disordered. Residues 204-224 (HSHDHDHAHGHGHLHSHDGPS) are compositionally biased toward basic and acidic residues. The chain crosses the membrane as a helical span at residues 239-259 (VFLHILADTLGSIGVIASAIM). Residues 260 to 264 (MQNFG) are Lumenal-facing. The chain crosses the membrane as a helical span at residues 265-285 (LMIADPICSILIAILIVVSVI). Residues 286 to 378 (PLLRESIGIL…LYVQIDFAAM (93 aa)) lie on the Cytoplasmic side of the membrane.

Belongs to the cation diffusion facilitator (CDF) transporter (TC 2.A.4) family. SLC30A subfamily. As to quaternary structure, homooligomer.

It localises to the golgi apparatus membrane. Its subcellular location is the cytoplasmic vesicle. The protein resides in the golgi apparatus. The protein localises to the trans-Golgi network. It is found in the sarcoplasmic reticulum. It localises to the mitochondrion. The catalysed reaction is Zn(2+)(in) = Zn(2+)(out). Zinc ion transporter mediating zinc entry from the cytosol into the lumen of organelles along the secretory pathway. By contributing to zinc ion homeostasis within the early secretory pathway, regulates the activation and folding of enzymes like alkaline phosphatases. In Rattus norvegicus (Rat), this protein is Zinc transporter 7.